A 416-amino-acid polypeptide reads, in one-letter code: Alpha-1-antiproteinase (416 aa).

The signal sequence occupies residues 1–24 (MALSITRGLLLLAALCCLAPTSLA). Asn-68, Asn-105, Asn-143, and Asn-269 each carry an N-linked (GlcNAc...) asparagine glycan. The segment at 371 to 390 (GATFLEAIPMSLPPDVEFNR) is RCL. Ser-381 carries the phosphoserine modification.

Belongs to the serpin family. In terms of assembly, interacts with CELA2A. Interacts with ERGIC3 and LMAN1/ERGIC53. Interacts with PRSS1/Trypsin. In terms of tissue distribution, plasma.

It localises to the secreted. Inhibits human leukocyte elastase, pig pancreatic elastase and bovine trypsin on a 1:1 molar basis. In Ovis aries (Sheep), this protein is Alpha-1-antiproteinase.